Consider the following 588-residue polypeptide: Proline--tRNA ligase (588 aa).

This sequence belongs to the class-II aminoacyl-tRNA synthetase family. ProS type 1 subfamily. Homodimer.

It localises to the cytoplasm. The enzyme catalyses tRNA(Pro) + L-proline + ATP = L-prolyl-tRNA(Pro) + AMP + diphosphate. In terms of biological role, catalyzes the attachment of proline to tRNA(Pro) in a two-step reaction: proline is first activated by ATP to form Pro-AMP and then transferred to the acceptor end of tRNA(Pro). As ProRS can inadvertently accommodate and process non-cognate amino acids such as alanine and cysteine, to avoid such errors it has two additional distinct editing activities against alanine. One activity is designated as 'pretransfer' editing and involves the tRNA(Pro)-independent hydrolysis of activated Ala-AMP. The other activity is designated 'posttransfer' editing and involves deacylation of mischarged Ala-tRNA(Pro). The misacylated Cys-tRNA(Pro) is not edited by ProRS. The protein is Proline--tRNA ligase of Corynebacterium glutamicum (strain R).